We begin with the raw amino-acid sequence, 323 residues long: Homocysteine S-methyltransferase 1 (323 aa).

In terms of domain architecture, Hcy-binding spans Val3–Leu317. 3 residues coordinate Zn(2+): Cys235, Cys302, and Cys303.

Monomer. It depends on Zn(2+) as a cofactor.

The enzyme catalyses S-methyl-L-methionine + L-homocysteine = 2 L-methionine + H(+). Catalyzes methyl transfer from S-methylmethionine (SMM) to adenosyl-L-homocysteine (AdoMet). SMM degradation (by HMT-1, HMT-2, HMT-3 and HMT-4) and biosynthesis (by MMT1) constitute the SMM cycle in plants, which is probably required to achieve short term control of AdoMet level. In Zea mays (Maize), this protein is Homocysteine S-methyltransferase 1 (HMT-1).